Here is a 208-residue protein sequence, read N- to C-terminus: Calcyphosin-like protein (208 aa).

4 consecutive EF-hand domains span residues A39–V74, M75–R110, A111–P146, and S154–S191. Ca(2+) contacts are provided by D52, D54, N56, T58, E63, D88, D90, N92, T94, and E99.

It localises to the cytoplasm. In Homo sapiens (Human), this protein is Calcyphosin-like protein (CAPSL).